Consider the following 616-residue polypeptide: Dihydroxy-acid dehydratase (616 aa).

Asp-81 contributes to the Mg(2+) binding site. Cys-122 is a binding site for [2Fe-2S] cluster. Mg(2+)-binding residues include Asp-123 and Lys-124. Residue Lys-124 is modified to N6-carboxylysine. Cys-195 provides a ligand contact to [2Fe-2S] cluster. Position 491 (Glu-491) interacts with Mg(2+). Catalysis depends on Ser-517, which acts as the Proton acceptor.

The protein belongs to the IlvD/Edd family. Homodimer. It depends on [2Fe-2S] cluster as a cofactor. Mg(2+) is required as a cofactor.

It catalyses the reaction (2R)-2,3-dihydroxy-3-methylbutanoate = 3-methyl-2-oxobutanoate + H2O. The enzyme catalyses (2R,3R)-2,3-dihydroxy-3-methylpentanoate = (S)-3-methyl-2-oxopentanoate + H2O. The protein operates within amino-acid biosynthesis; L-isoleucine biosynthesis; L-isoleucine from 2-oxobutanoate: step 3/4. Its pathway is amino-acid biosynthesis; L-valine biosynthesis; L-valine from pyruvate: step 3/4. Functionally, functions in the biosynthesis of branched-chain amino acids. Catalyzes the dehydration of (2R,3R)-2,3-dihydroxy-3-methylpentanoate (2,3-dihydroxy-3-methylvalerate) into 2-oxo-3-methylpentanoate (2-oxo-3-methylvalerate) and of (2R)-2,3-dihydroxy-3-methylbutanoate (2,3-dihydroxyisovalerate) into 2-oxo-3-methylbutanoate (2-oxoisovalerate), the penultimate precursor to L-isoleucine and L-valine, respectively. The sequence is that of Dihydroxy-acid dehydratase from Salmonella dublin (strain CT_02021853).